The following is a 178-amino-acid chain: Large ribosomal subunit protein bL25 (178 aa).

It belongs to the bacterial ribosomal protein bL25 family. CTC subfamily. As to quaternary structure, part of the 50S ribosomal subunit; part of the 5S rRNA/L5/L18/L25 subcomplex. Contacts the 5S rRNA. Binds to the 5S rRNA independently of L5 and L18.

This is one of the proteins that binds to the 5S RNA in the ribosome where it forms part of the central protuberance. In Campylobacter jejuni subsp. jejuni serotype O:6 (strain 81116 / NCTC 11828), this protein is Large ribosomal subunit protein bL25.